Consider the following 485-residue polypeptide: Glycogen synthase (485 aa).

Position 17 (K17) interacts with ADP-alpha-D-glucose.

Belongs to the glycosyltransferase 1 family. Bacterial/plant glycogen synthase subfamily.

It catalyses the reaction [(1-&gt;4)-alpha-D-glucosyl](n) + ADP-alpha-D-glucose = [(1-&gt;4)-alpha-D-glucosyl](n+1) + ADP + H(+). It participates in glycan biosynthesis; glycogen biosynthesis. Its function is as follows. Synthesizes alpha-1,4-glucan chains using ADP-glucose. This Novosphingobium aromaticivorans (strain ATCC 700278 / DSM 12444 / CCUG 56034 / CIP 105152 / NBRC 16084 / F199) protein is Glycogen synthase.